The chain runs to 414 residues: Eukaryotic initiation factor 4A (414 aa).

Positions 41–69 match the Q motif motif; it reads ESFDDMGLQENLLRGIYAYGFEKPSAIQQ. The Helicase ATP-binding domain maps to 72-242; the sequence is IVPFCKGLDV…RKFMNKPVRI (171 aa). Position 85–92 (85–92) interacts with ATP; sequence AQSGTGKT. Residues 190–193 carry the DEAD box motif; that stretch reads DEAD. The Helicase C-terminal domain occupies 253–414; it reads GIKQFYVNVE…ELPANVADLL (162 aa).

The protein belongs to the DEAD box helicase family. eIF4A subfamily. As to quaternary structure, eIF4F is a multi-subunit complex, the composition of which varies with external and internal environmental conditions. It is composed of at least EIF4A, EIF4E and EIF4G.

It carries out the reaction ATP + H2O = ADP + phosphate + H(+). Its function is as follows. ATP-dependent RNA helicase which is a subunit of the eIF4F complex involved in cap recognition and is required for mRNA binding to ribosome. In the current model of translation initiation, eIF4A unwinds RNA secondary structures in the 5'-UTR of mRNAs which is necessary to allow efficient binding of the small ribosomal subunit, and subsequent scanning for the initiator codon. In Triticum aestivum (Wheat), this protein is Eukaryotic initiation factor 4A.